The sequence spans 228 residues: 2-phospho-L-lactate guanylyltransferase (228 aa).

This sequence belongs to the CofC family. Homodimer.

The catalysed reaction is (2S)-2-phospholactate + GTP + H(+) = (2S)-lactyl-2-diphospho-5'-guanosine + diphosphate. Its pathway is cofactor biosynthesis; coenzyme F420 biosynthesis. Functionally, guanylyltransferase that catalyzes the activation of (2S)-2-phospholactate (2-PL) as (2S)-lactyl-2-diphospho-5'-guanosine, via the condensation of 2-PL with GTP. It is involved in the biosynthesis of coenzyme F420, a hydride carrier cofactor. The protein is 2-phospho-L-lactate guanylyltransferase of Methanosphaera stadtmanae (strain ATCC 43021 / DSM 3091 / JCM 11832 / MCB-3).